A 966-amino-acid polypeptide reads, in one-letter code: Catenin alpha-2 (966 aa).

Over residues 924–940 the composition is skewed to basic and acidic residues; it reads PEKKPLVKREKPEEYQT. The tract at residues 924–952 is disordered; that stretch reads PEKKPLVKREKPEEYQTRVRRGSQKKHIS. Positions 941–951 are enriched in basic residues; sequence RVRRGSQKKHI.

The protein belongs to the vinculin/alpha-catenin family.

It localises to the cell membrane. The protein resides in the cytoplasm. Its subcellular location is the cytoskeleton. The protein localises to the cell junction. It is found in the adherens junction. It localises to the cell projection. The protein resides in the axon. Its subcellular location is the nucleus. In terms of biological role, may function as a linker between cadherin adhesion receptors and the cytoskeleton to regulate cell-cell adhesion and differentiation in the nervous system. The chain is Catenin alpha-2 (ctnna2) from Xenopus laevis (African clawed frog).